A 349-amino-acid polypeptide reads, in one-letter code: D-arabinitol dehydrogenase 1 (349 aa).

Positions 46, 67, 97, 100, 103, 111, and 151 each coordinate Zn(2+).

This sequence belongs to the zinc-containing alcohol dehydrogenase family. Requires Zn(2+) as cofactor.

The protein resides in the cell projection. It catalyses the reaction D-arabinitol + NADP(+) = D-xylulose + NADPH + H(+). The enzyme catalyses D-arabinitol + NADP(+) = D-ribulose + NADPH + H(+). In terms of biological role, D-arabinitol dehydrogenase which mostly produces D-arabinitol in haustoria, the appendages of the parasitic fungus that penetrate the host's tissue and draws nutrients from it. D-arabinitol accumulation may serve as a carbohydrate storage compound. D-arabinitol is also capable of quenching reactive oxygen species involved in host plant defense reactions, thus providing protection for the rust fungus during the pathogenic interaction. In Uromyces fabae (Rust fungus), this protein is D-arabinitol dehydrogenase 1 (ARD1).